We begin with the raw amino-acid sequence, 370 residues long: MDAPRQVVNFGPGPAKLPHSVLLEIQKELLDYKGVGISVLEMSHRSSDFAKIINNTENLVRELLAVPDNYKVIFLQGGGCGQFSAVPLNLIGLKAGRCADYVVTGAWSAKAAEEAKKFGTINIVHPKLGSYTKIPDPSTWNLNPDASYVYYCANETVHGVEFDFIPDVKGAVLVCDMSSNFLSKPVDVSKFGVIFAGAQKNVGSAGVTVVIVRDDLLGFALRECPSVLEYKVQAGNSSLYNTPPCFSIYVMGLVLEWIKNNGGAAAMEKLSSIKSQTIYEIIDNSQGFYVCPVEPQNRSKMNIPFRIGNAKGDDALEKRFLDKALELNMLSLKGHRSVGGIRASLYNAVTIEDVQKLAAFMKKFLEMHQL.

Methionine 1 carries the post-translational modification N-acetylmethionine. O-phospho-L-serine is bound by residues histidine 44 and arginine 45. N6-acetyllysine is present on lysine 51. Residues glycine 79, cysteine 80, and tryptophan 107 each contribute to the pyridoxal 5'-phosphate site. At lysine 127 the chain carries N6-acetyllysine. Residues threonine 156, aspartate 176, and glutamine 199 each coordinate pyridoxal 5'-phosphate. Lysine 200 is modified (N6-(pyridoxal phosphate)lysine). 2 residues coordinate pyridoxal 5'-phosphate: asparagine 241 and threonine 242. Lysine 269, lysine 318, and lysine 323 each carry N6-acetyllysine. Serine 331 is subject to Phosphoserine. Lysine 333 is subject to N6-acetyllysine. Residues histidine 335, arginine 336, and arginine 342 each coordinate O-phospho-L-serine.

Belongs to the class-V pyridoxal-phosphate-dependent aminotransferase family. SerC subfamily. In terms of assembly, homodimer. The cofactor is pyridoxal 5'-phosphate. Expressed at high levels in the brain, liver, kidney and pancreas, and very weakly expressed in the thymus, prostate, testis and colon.

It catalyses the reaction O-phospho-L-serine + 2-oxoglutarate = 3-phosphooxypyruvate + L-glutamate. It participates in amino-acid biosynthesis; L-serine biosynthesis; L-serine from 3-phospho-D-glycerate: step 2/3. Its activity is regulated as follows. Phosphoserine transaminase activity is strongly stimulated by increasing the ionic strength. In terms of biological role, involved in L-serine biosynthesis via the phosphorylated pathway, a three-step pathway converting the glycolytic intermediate 3-phospho-D-glycerate into L-serine. Catalyzes the second step, that is the pyridoxal 5'-phosphate-dependent transamination of 3-phosphohydroxypyruvate and L-glutamate to O-phosphoserine (OPS) and alpha-ketoglutarate. This Homo sapiens (Human) protein is Phosphoserine aminotransferase.